Consider the following 317-residue polypeptide: Spermidine synthase 2 (317 aa).

One can recognise a PABS domain in the interval 27 to 264 (PGWFSEISPL…GMIGFMLCST (238 aa)). S-adenosyl 3-(methylsulfanyl)propylamine is bound at residue Q58. Y88 contacts putrescine. Residues Q89, D113, E133, 164 to 165 (DG), and D183 contribute to the S-adenosyl 3-(methylsulfanyl)propylamine site. The Proton acceptor role is filled by D183. Putrescine-binding positions include 183–186 (DSSD) and Y252.

The protein belongs to the spermidine/spermine synthase family.

It carries out the reaction S-adenosyl 3-(methylsulfanyl)propylamine + putrescine = S-methyl-5'-thioadenosine + spermidine + H(+). It participates in amine and polyamine biosynthesis; spermidine biosynthesis; spermidine from putrescine: step 1/1. This Datura stramonium (Jimsonweed) protein is Spermidine synthase 2.